The following is a 506-amino-acid chain: Cysteine--tRNA ligase (506 aa).

Residue C34 coordinates Zn(2+). The short motif at 36 to 46 (PTVYDFAHIGN) is the 'HIGH' region element. Residues C230, H269, and E273 each contribute to the Zn(2+) site. Positions 302 to 306 (KMSKS) match the 'KMSKS' region motif. K305 lines the ATP pocket.

This sequence belongs to the class-I aminoacyl-tRNA synthetase family. As to quaternary structure, monomer. Zn(2+) is required as a cofactor.

The protein resides in the cytoplasm. It catalyses the reaction tRNA(Cys) + L-cysteine + ATP = L-cysteinyl-tRNA(Cys) + AMP + diphosphate. The sequence is that of Cysteine--tRNA ligase from Brucella ovis (strain ATCC 25840 / 63/290 / NCTC 10512).